Consider the following 74-residue polypeptide: Protein F9 homolog (74 aa).

Residues 1–34 (GHAAANCALARVATALTRRVPASRHGLAEGGTPP) are Virion surface-facing. A helical transmembrane segment spans residues 35 to 55 (WTLLLAVAAVAVLGVVAISLL). Residues 56-73 (RRALRIRFRYSKSIQTLR) are Intravirion-facing.

It belongs to the chordopoxvirinae L1 protein family.

The protein resides in the virion membrane. This chain is Protein F9 homolog, found in Capra hircus (Goat).